The sequence spans 86 residues: MGLFDFLKAKKTTAETAKNRLQIIIAQERSHRGGPDYLPLLQRELLEVIKKYVNIDVDAVKVDLVKDGQHDVLDISVALPEGPDKP.

Belongs to the MinE family.

In terms of biological role, prevents the cell division inhibition by proteins MinC and MinD at internal division sites while permitting inhibition at polar sites. This ensures cell division at the proper site by restricting the formation of a division septum at the midpoint of the long axis of the cell. This chain is Cell division topological specificity factor, found in Stenotrophomonas maltophilia (strain K279a).